We begin with the raw amino-acid sequence, 370 residues long: Phosphate acyltransferase (370 aa).

The protein belongs to the PlsX family. Homodimer. Probably interacts with PlsY.

Its subcellular location is the cytoplasm. It carries out the reaction a fatty acyl-[ACP] + phosphate = an acyl phosphate + holo-[ACP]. Its pathway is lipid metabolism; phospholipid metabolism. Functionally, catalyzes the reversible formation of acyl-phosphate (acyl-PO(4)) from acyl-[acyl-carrier-protein] (acyl-ACP). This enzyme utilizes acyl-ACP as fatty acyl donor, but not acyl-CoA. In Polaromonas naphthalenivorans (strain CJ2), this protein is Phosphate acyltransferase.